A 211-amino-acid polypeptide reads, in one-letter code: Pyridoxine/pyridoxamine 5'-phosphate oxidase (211 aa).

Substrate-binding positions include 7–10 (RREY) and K65. FMN is bound by residues 60-65 (RIVLLK), 75-76 (YT), R81, K82, and Q104. Substrate is bound by residues Y122, R126, and S130. Residues 139 to 140 (QS) and W184 contribute to the FMN site. 190–192 (RLH) provides a ligand contact to substrate. Position 194 (R194) interacts with FMN.

This sequence belongs to the pyridoxamine 5'-phosphate oxidase family. In terms of assembly, homodimer. Requires FMN as cofactor.

The catalysed reaction is pyridoxamine 5'-phosphate + O2 + H2O = pyridoxal 5'-phosphate + H2O2 + NH4(+). The enzyme catalyses pyridoxine 5'-phosphate + O2 = pyridoxal 5'-phosphate + H2O2. It participates in cofactor metabolism; pyridoxal 5'-phosphate salvage; pyridoxal 5'-phosphate from pyridoxamine 5'-phosphate: step 1/1. The protein operates within cofactor metabolism; pyridoxal 5'-phosphate salvage; pyridoxal 5'-phosphate from pyridoxine 5'-phosphate: step 1/1. Functionally, catalyzes the oxidation of either pyridoxine 5'-phosphate (PNP) or pyridoxamine 5'-phosphate (PMP) into pyridoxal 5'-phosphate (PLP). This chain is Pyridoxine/pyridoxamine 5'-phosphate oxidase, found in Vibrio cholerae serotype O1 (strain ATCC 39315 / El Tor Inaba N16961).